The following is a 267-amino-acid chain: Energy-coupling factor transporter transmembrane protein EcfT (267 aa).

A run of 5 helical transmembrane segments spans residues 30–50 (FWYVVIIFFAKGPLTYLLLVA), 67–87 (WAGLKPLLWVIGLTIAIQVLF), 110–130 (ALVILARFILIVLASTVLTAT), 152–172 (VPVNQIAMMISIALRFIPTIM), and 247–267 (SIALAVVVIVSVLFFVARILL).

It belongs to the energy-coupling factor EcfT family. In terms of assembly, forms a stable energy-coupling factor (ECF) transporter complex composed of 2 membrane-embedded substrate-binding proteins (S component), 2 ATP-binding proteins (A component) and 2 transmembrane proteins (T component). May be able to interact with more than 1 S component at a time.

It localises to the cell membrane. Its function is as follows. Transmembrane (T) component of an energy-coupling factor (ECF) ABC-transporter complex. Unlike classic ABC transporters this ECF transporter provides the energy necessary to transport a number of different substrates. The protein is Energy-coupling factor transporter transmembrane protein EcfT of Limosilactobacillus fermentum (strain CECT 5716 / Lc40) (Lactobacillus fermentum).